Consider the following 574-residue polypeptide: Sulfate adenylyltransferase (574 aa).

An N-terminal region spans residues 1-169; that stretch reads MANSPHGGVL…IEAVNKLNHY (169 aa). The segment at 170 to 394 is catalytic; the sequence is DYVALRYSPA…LRESSPPRAT (225 aa). Gln197 is a sulfate binding site. ATP contacts are provided by residues 197–200 and 291–294; these read QTRN and GRDH. Residues Thr198, Arg199, and Asn200 contribute to the active site. A sulfate-binding site is contributed by Arg199. Ala295 contributes to the sulfate binding site. Val333 provides a ligand contact to ATP. Residues 395-574 form an allosteric regulation domain; adenylyl-sulfate kinase-like region; sequence QGFTIFLTGY…LESEGYFDRL (180 aa). 3'-phosphoadenylyl sulfate-binding positions include 434–437, Arg451, 477–478, and Arg516; these read DTVR and IA.

In the N-terminal section; belongs to the sulfate adenylyltransferase family. It in the C-terminal section; belongs to the APS kinase family. In terms of assembly, homohexamer. Dimer of trimers.

It is found in the cytoplasm. The enzyme catalyses sulfate + ATP + H(+) = adenosine 5'-phosphosulfate + diphosphate. It participates in sulfur metabolism; hydrogen sulfide biosynthesis; sulfite from sulfate: step 1/3. Its activity is regulated as follows. Allosterically inhibited by 3'-phosphoadenosine 5'-phosphosulfate (PAPS). Catalyzes the first intracellular reaction of sulfate assimilation, forming adenosine-5'-phosphosulfate (APS) from inorganic sulfate and ATP. Plays an important role in sulfate activation as a component of the biosynthesis pathway of sulfur-containing amino acids. The polypeptide is Sulfate adenylyltransferase (Aspergillus terreus (strain NIH 2624 / FGSC A1156)).